A 318-amino-acid polypeptide reads, in one-letter code: Small ribosomal subunit protein RACK1 (318 aa).

7 WD repeats span residues 11–44 (GHRG…LSWG), 65–95 (GHSA…RLWN), 107–137 (GHTK…RVWN), 150–182 (AHTD…KVWD), 194–224 (GHTN…RLWD), 235–264 (AAGA…RIFD), and 282–315 (KKIV…WGVS).

This sequence belongs to the WD repeat G protein beta family. Ribosomal protein RACK1 subfamily.

In Trypanosoma brucei brucei, this protein is Small ribosomal subunit protein RACK1.